The sequence spans 512 residues: Rab11 family-interacting protein 2 (512 aa).

Residues 1-120 (MMLSEQAQKW…DKQRRKTEWF (120 aa)) form the C2 domain. The interval 15 to 102 (VQVTVLQAKD…GLDKFLGQVA (88 aa)) is necessary for its cellular translocation to the plasma membrane. 2 disordered regions span residues 174 to 231 (RKSD…MSDL) and 263 to 287 (PESGSLKSPHRRTLSFDTSKLNQPG). 2 stretches are compositionally biased toward polar residues: residues 221 to 231 (RLSSAHSMSDL) and 277 to 287 (SFDTSKLNQPG). Phosphoserine; by MARK2 is present on Ser227. At Ser277 the chain carries Phosphoserine. Residues 323–325 (NPF) carry the NPF 1 motif. Residues 347 to 374 (KESKREKREKVSLFERVTGKRDSRRPDK) show a composition bias toward basic and acidic residues. The segment at 347-390 (KESKREKREKVSLFERVTGKRDSRRPDKLNNGGSDSPCDLKSPS) is disordered. 2 short sequence motifs (NPF) span residues 406–408 (NPF) and 440–442 (NPF). Residues 437-499 (PDNNPFDATA…EETPSILRVP (63 aa)) form the FIP-RBD domain. Positions 465–512 (ELLRRKDTHIRELEDYIDNLLVRVMEETPSILRVPYEPSRKAGKFTNS) are necessary for interaction with AP2A1, RAB11A, subcellular location, endocytosis activity and homooligomerization.

Homooligomerizes in a Rab11-independent manner. Forms a heterooligomeric complex with RAB11FIP4. Interacts with AP2A1, MYO5B, RAB25 and REPS1. Interacts with RAB11A and RAB11B (activated GTP-bound form). Interacts with NPC1L1. Interacts (via NPF motifs) with EHD1 and EHD3. Interacts with TICAM2; this interaction directs RAB11FIP2 to the phagosome. Interacts with RAB14 and RAB25 (GTP-bound forms). Phosphorylation at Ser-227 by MARK2 regulates epithelial cell polarity.

The protein resides in the cell membrane. Its subcellular location is the recycling endosome membrane. In terms of biological role, a Rab11 effector binding preferentially phosphatidylinositol 3,4,5-trisphosphate (PtdInsP3) and phosphatidic acid (PA) and acting in the regulation of the transport of vesicles from the endosomal recycling compartment (ERC) to the plasma membrane. Involved in insulin granule exocytosis. Also involved in receptor-mediated endocytosis and membrane trafficking of recycling endosomes, probably originating from clathrin-coated vesicles. Required in a complex with MYO5B and RAB11 for the transport of NPC1L1 to the plasma membrane. Also acts as a regulator of cell polarity. Plays an essential role in phagocytosis through a mechanism involving TICAM2, RAC1 and CDC42 Rho GTPases for controlling actin-dynamics. The sequence is that of Rab11 family-interacting protein 2 (Rab11fip2) from Mus musculus (Mouse).